Here is a 986-residue protein sequence, read N- to C-terminus: Ephrin type-B receptor 2 (986 aa).

An N-terminal signal peptide occupies residues 1 to 18; that stretch reads MAVRRLGAALLLLPLLAA. At 19–543 the chain is on the extracellular side; sequence VEETLMDSTT…QTSIKEKLPL (525 aa). The 183-residue stretch at 20–202 folds into the Eph LBD domain; it reads EETLMDSTTA…FYRKCPRIIQ (183 aa). 2 disulfide bridges follow: Cys-62/Cys-184 and Cys-97/Cys-107. N-linked (GlcNAc...) asparagine glycosylation is found at Asn-265, Asn-336, Asn-428, and Asn-482. Fibronectin type-III domains follow at residues 324-434 and 435-530; these read IPSA…TNQA and APSA…TMTE. The helical transmembrane segment at 544–564 threads the bilayer; sequence IVGSSAAGLVFLIAVVVIAIV. Topologically, residues 565 to 986 are cytoplasmic; the sequence is CNRRGFERAD…QMNQIQSVEV (422 aa). A Protein kinase domain is found at 621 to 884; the sequence is VKIEQVIGAG…QIVNTLDKMI (264 aa). Residues 627–635 and Lys-653 each bind ATP; that span reads IGAGEFGEV. Asp-746 functions as the Proton acceptor in the catalytic mechanism. A Glycyl lysine isopeptide (Lys-Gly) (interchain with G-Cter in ubiquitin) cross-link involves residue Lys-891. One can recognise an SAM domain in the interval 913-977; it reads TSFNTVDEWL…LNSIQVMRAQ (65 aa). The short motif at 984 to 986 is the PDZ-binding element; that stretch reads VEV.

Belongs to the protein kinase superfamily. Tyr protein kinase family. Ephrin receptor subfamily. In terms of assembly, heterotetramer upon binding of the ligand. The heterotetramer is composed of an ephrin dimer and a receptor dimer. Interacts (via PDZ-binding motif) with GRIP1 and PICK1 (via PDZ domain). Interacts with ARHGEF15; mediates ARHGEF15 phosphorylation, ubiquitination and degradation by the proteasome. Interacts with AQP1; involved in endolymph production in the inner ear. Interacts with EFNA5. Interacts with SPSB1. Interacts with SPSB4. Interacts with SH2D3C. In terms of processing, autophosphorylated; ligand binding stimulates autophosphorylation on tyrosine residues. Post-translationally, ligand binding induces cleavage by matrix metalloproteinases (MMPs) such as MMP7/MMP9, producing an EphB2/N-terminal fragment (NTF) and a C-terminal long fragment (EphB2-LF). EphB2-LF is further cleaved by MMPs, producing EphB2/CTF1 which is further cleaved by the PS1/gamma-secretase producing EphB2/CTF2. Polyubiquitinated; ligand binding stimulates ubiquitination. Ubiquitinated by RNF186 at Lys-891, mainly through 'Lys-27'-linked polyubiquitin chains. Ubiquitinated by CRL2(KLHDC2) E3 ligase complex. In terms of tissue distribution, expressed in the epithelial dark cells of the inner ear. Expressed in the region of the proximal tubules of the kidney nephron. Expressed in myogenic progenitor cells.

It is found in the cell membrane. It localises to the cell projection. The protein localises to the axon. The protein resides in the dendrite. The catalysed reaction is L-tyrosyl-[protein] + ATP = O-phospho-L-tyrosyl-[protein] + ADP + H(+). Its function is as follows. Receptor tyrosine kinase which binds promiscuously transmembrane ephrin-B family ligands residing on adjacent cells, leading to contact-dependent bidirectional signaling into neighboring cells. The signaling pathway downstream of the receptor is referred to as forward signaling while the signaling pathway downstream of the ephrin ligand is referred to as reverse signaling. Functions in axon guidance during development. Involved in the guidance of commissural axons, that form a major interhemispheric connection between the 2 temporal lobes of the cerebral cortex. Also involved in guidance of contralateral inner ear efferent growth cones at the midline and of retinal ganglion cell axons to the optic disk. In addition to axon guidance, also regulates dendritic spines development and maturation and stimulates the formation of excitatory synapses. Upon activation by EFNB1, abolishes the ARHGEF15-mediated negative regulation on excitatory synapse formation. Controls other aspects of development including angiogenesis, palate development and in inner ear development through regulation of endolymph production. Forward and reverse signaling through the EFNB2/EPHB2 complex regulate movement and adhesion of cells that tubularize the urethra and septate the cloaca. May function as a tumor suppressor. May be involved in the regulation of platelet activation and blood coagulation. The polypeptide is Ephrin type-B receptor 2 (Mus musculus (Mouse)).